Reading from the N-terminus, the 75-residue chain is Protein Tlp homolog (75 aa).

Positions 48-75 are disordered; it reads KNQRRREALDGMREEIKDEARDKKNGYM.

Belongs to the Tlp family.

This chain is Protein Tlp homolog, found in Clostridium botulinum (strain 657 / Type Ba4).